The chain runs to 626 residues: uncharacterized protein (626 aa).

A helical membrane pass occupies residues 103–123 (AGALLVKFFPLLLLYPLTYLA). Positions 200 to 618 (FENREPVGSG…DILEAARPFL (419 aa)) constitute a Protein kinase domain. ATP is bound by residues 206–214 (VGSGCVAQV) and K311. D445 serves as the catalytic Proton acceptor.

It belongs to the protein kinase superfamily. ADCK protein kinase family.

It localises to the mitochondrion. The protein localises to the membrane. Functionally, the function of this protein is not yet clear. It is not known if it has protein kinase activity and what type of substrate it would phosphorylate (Ser, Thr or Tyr). Involved in the mitochondrial import of CoQ precursors, plays a role in muscle mitochondrial function and fatty acid beta-oxidation. This is an uncharacterized protein from Homo sapiens (Human).